Consider the following 369-residue polypeptide: FAD-dependent monooxygenase FPY4 (369 aa).

The protein belongs to the aromatic-ring hydroxylase family. The cofactor is FAD.

It functions in the pathway secondary metabolite biosynthesis. Its function is as follows. FAD-dependent monooxygenase; part of the gene cluster that mediates the biosynthesis of the gamma-pyrones fusapyrone (FPY) and deoxyfusapyrone (dFPY). FPY is an undecaketide and thus likely synthesized by the polyketide synthase FPY1 from acetyl-CoA functioning as starter unit and the addition of 10 malonyl-CoA extender units by successive Claisen-condensations. Next to this, FPY shares some rare features: C-glycosylated 4-deoxyglucose at C-3, a gem-dimethyl group at C-13, and an alpha-beta to beta-gamma double bond shift at C-20. During FPY biosynthesis mono-C-methyl groups are transferred to the tetra-, penta-, hexa- and heptaketide, while two C-methyl groups are transferred to the nonaketide, suggesting that the CMet domain is programmed to selectively catalyze two successive C-alpha-methylation reactions of the nonaketide, while other alpha-carbons are non- or mono-methylated only. While the origin of the 4'-deoxyglucose moiety remains opaque, its transfer to C-3 is most likely mediated by the C-glycosyltransferase FPY2. Next to this, the hydroxyl group present at C-33 and discriminating between FPY and dFPY, is likely to be installed by the cytochrome P450 monooxygenase FPY7. No putative function can be predicted for the remaining genes FPY3-FPY6. The sequence is that of FAD-dependent monooxygenase FPY4 from Fusarium mangiferae (Mango malformation disease fungus).